A 259-amino-acid polypeptide reads, in one-letter code: Insulin-induced gene 1 protein (259 aa).

Topologically, residues Met-1–Leu-66 are cytoplasmic. The tract at residues Pro-33 to Ala-57 is disordered. A helical transmembrane segment spans residues Val-67–Ile-89. The Extracellular portion of the chain corresponds to Gln-90–Ala-108. The chain crosses the membrane as a helical span at residues Trp-109–Tyr-126. Topologically, residues Pro-127 to Arg-141 are cytoplasmic. Residues Lys-138 and Lys-140 each participate in a glycyl lysine isopeptide (Lys-Gly) (interchain with G-Cter in ubiquitin) cross-link. Residues Glu-142–Asp-164 form a helical membrane-spanning segment. Over Phe-165–Asn-167 the chain is Extracellular. The helical transmembrane segment at Asn-168–Phe-186 threads the bilayer. Residues Asp-187 to Ser-191 lie on the Cytoplasmic side of the membrane. The residue at position 189 (Ser-189) is a Phosphoserine. A helical membrane pass occupies residues Gly-192 to Asn-213. Over Gly-214–Arg-227 the chain is Extracellular. A helical membrane pass occupies residues Ser-228–Gly-245. The Cytoplasmic portion of the chain corresponds to Arg-246–Asp-259. A KxHxx motif is present at residues Pro-253–Asp-259.

Belongs to the INSIG family. In terms of assembly, interacts with SCAP; interaction is direct and only takes place in the presence of sterols; it prevents interaction between SCAP and the coat protein complex II (COPII). Associates with the SCAP-SREBP complex (composed of SCAP and SREBF1/SREBP1 or SREBF2/SREBP2); association is mediated via its interaction with SCAP and only takes place in the presence of sterols. Interaction with SCAP is mutually exclusive with PAQR3. Interacts with HMGCR (via its SSD); the interaction, accelerated by sterols, leads to the recruitment of HMGCR to AMFR/gp78 for its ubiquitination by the sterol-mediated ERAD pathway. Interacts with AMFR/gp78 (via its membrane domain); the interaction recruits HMCR at the ER membrane for its ubiquitination and degradation by the sterol-mediated ERAD pathway. Interacts with SOAT2/ACAT2; leading to promote recruitment of AMFR/gp78 and subsequent ubiquitination of SOAT2/ACAT2. Interacts with RNF139. Interacts with RNF145. In terms of processing, phosphorylation at Ser-189 by PCK1 reduces binding to oxysterol, disrupting the interaction between INSIG1 and SCAP, thereby promoting nuclear translocation of SREBP proteins (SREBF1/SREBP1 or SREBF2/SREBP2) and subsequent transcription of downstream lipogenesis-related genes. Ubiquitinated by AMFR/gp78 in response to sterol deprivation, leading to its degradation: when the SCAP-SREBP complex becomes dissociated from INSIG1, INSIG1 is then ubiquitinated and degraded in proteasomes. Although ubiquitination is required for rapid INSIG1 degradation, it is not required for release of the SCAP-SREBP complex. Ubiquitinated by RNF139. As to expression, highly expressed in liver and kidney.

It localises to the endoplasmic reticulum membrane. Its function is as follows. Oxysterol-binding protein that mediates feedback control of cholesterol synthesis by controlling both endoplasmic reticulum to Golgi transport of SCAP and degradation of HMGCR. Acts as a negative regulator of cholesterol biosynthesis by mediating the retention of the SCAP-SREBP complex in the endoplasmic reticulum, thereby blocking the processing of sterol regulatory element-binding proteins (SREBPs) SREBF1/SREBP1 and SREBF2/SREBP2. Binds oxysterol, including 25-hydroxycholesterol, regulating interaction with SCAP and retention of the SCAP-SREBP complex in the endoplasmic reticulum. In presence of oxysterol, interacts with SCAP, retaining the SCAP-SREBP complex in the endoplasmic reticulum, thereby preventing SCAP from escorting SREBF1/SREBP1 and SREBF2/SREBP2 to the Golgi. Sterol deprivation or phosphorylation by PCK1 reduce oxysterol-binding, disrupting the interaction between INSIG1 and SCAP, thereby promoting Golgi transport of the SCAP-SREBP complex, followed by processing and nuclear translocation of SREBF1/SREBP1 and SREBF2/SREBP2. Also regulates cholesterol synthesis by regulating degradation of HMGCR: initiates the sterol-mediated ubiquitin-mediated endoplasmic reticulum-associated degradation (ERAD) of HMGCR via recruitment of the reductase to the ubiquitin ligases AMFR/gp78 and/or RNF139. Also regulates degradation of SOAT2/ACAT2 when the lipid levels are low: initiates the ubiquitin-mediated degradation of SOAT2/ACAT2 via recruitment of the ubiquitin ligases AMFR/gp78. The sequence is that of Insulin-induced gene 1 protein from Rattus norvegicus (Rat).